The following is a 342-amino-acid chain: Ribosomal RNA small subunit methyltransferase C (342 aa).

This sequence belongs to the methyltransferase superfamily. RsmC family. Monomer.

It localises to the cytoplasm. It catalyses the reaction guanosine(1207) in 16S rRNA + S-adenosyl-L-methionine = N(2)-methylguanosine(1207) in 16S rRNA + S-adenosyl-L-homocysteine + H(+). Its function is as follows. Specifically methylates the guanine in position 1207 of 16S rRNA in the 30S particle. This chain is Ribosomal RNA small subunit methyltransferase C, found in Citrobacter koseri (strain ATCC BAA-895 / CDC 4225-83 / SGSC4696).